The chain runs to 184 residues: ATP synthase subunit b, chloroplastic (184 aa).

A helical membrane pass occupies residues 27–49 (LATNLINLSVVIGVLIFFGKGVL).

Belongs to the ATPase B chain family. In terms of assembly, F-type ATPases have 2 components, F(1) - the catalytic core - and F(0) - the membrane proton channel. F(1) has five subunits: alpha(3), beta(3), gamma(1), delta(1), epsilon(1). F(0) has four main subunits: a(1), b(1), b'(1) and c(10-14). The alpha and beta chains form an alternating ring which encloses part of the gamma chain. F(1) is attached to F(0) by a central stalk formed by the gamma and epsilon chains, while a peripheral stalk is formed by the delta, b and b' chains.

The protein localises to the plastid. It localises to the chloroplast thylakoid membrane. Its function is as follows. F(1)F(0) ATP synthase produces ATP from ADP in the presence of a proton or sodium gradient. F-type ATPases consist of two structural domains, F(1) containing the extramembraneous catalytic core and F(0) containing the membrane proton channel, linked together by a central stalk and a peripheral stalk. During catalysis, ATP synthesis in the catalytic domain of F(1) is coupled via a rotary mechanism of the central stalk subunits to proton translocation. Functionally, component of the F(0) channel, it forms part of the peripheral stalk, linking F(1) to F(0). The chain is ATP synthase subunit b, chloroplastic from Jasminum nudiflorum (Winter jasmine).